The following is a 154-amino-acid chain: Small ribosomal subunit protein uS13 (154 aa).

It belongs to the universal ribosomal protein uS13 family.

The protein localises to the cytoplasm. Its function is as follows. Located at the top of the head of the 40S subunit, it contacts several helices of the 18S rRNA. This chain is Small ribosomal subunit protein uS13 (rps18), found in Dictyostelium discoideum (Social amoeba).